Consider the following 956-residue polypeptide: UvrABC system protein A (956 aa).

Position 33–40 (33–40 (GLSGSGKS)) interacts with ATP. The C4-type zinc finger occupies 252 to 279 (CPYCGFSVGELEPRMFSFNSPFGACPTC). ABC transporter domains lie at 309–587 (WRPI…KNSI) and 607–936 (GNGL…KYLK). An ATP-binding site is contributed by 639 to 646 (GVSGSGKS). The segment at 738–764 (CEACKGDGIIKIEMHFLPDVYVPCEVC) adopts a C4-type zinc-finger fold.

It belongs to the ABC transporter superfamily. UvrA family. As to quaternary structure, forms a heterotetramer with UvrB during the search for lesions.

It is found in the cytoplasm. The UvrABC repair system catalyzes the recognition and processing of DNA lesions. UvrA is an ATPase and a DNA-binding protein. A damage recognition complex composed of 2 UvrA and 2 UvrB subunits scans DNA for abnormalities. When the presence of a lesion has been verified by UvrB, the UvrA molecules dissociate. The polypeptide is UvrABC system protein A (Listeria monocytogenes serovar 1/2a (strain ATCC BAA-679 / EGD-e)).